Reading from the N-terminus, the 215-residue chain is Small ribosomal subunit protein uS3 (215 aa).

The KH type-2 domain occupies valine 39–arginine 107.

This sequence belongs to the universal ribosomal protein uS3 family. In terms of assembly, part of the 30S ribosomal subunit. Forms a tight complex with proteins S10 and S14.

Its function is as follows. Binds the lower part of the 30S subunit head. Binds mRNA in the 70S ribosome, positioning it for translation. The sequence is that of Small ribosomal subunit protein uS3 from Nitrosomonas europaea (strain ATCC 19718 / CIP 103999 / KCTC 2705 / NBRC 14298).